Reading from the N-terminus, the 61-residue chain is Large ribosomal subunit protein bL28 (61 aa).

The disordered stretch occupies residues M1 to T24. Positions K9–P23 are enriched in polar residues.

It belongs to the bacterial ribosomal protein bL28 family.

This chain is Large ribosomal subunit protein bL28, found in Lactobacillus acidophilus (strain ATCC 700396 / NCK56 / N2 / NCFM).